The primary structure comprises 82 residues: Delta-conotoxin-like CnVIA (82 aa).

A signal peptide spans 1–22 (MKLTCMMIVAVLFLTAWTFVTA). Residues 23–49 (DDSRNGLENLSPKARHEMKNPEASKSN) constitute a propeptide that is removed on maturation. Disulfide bonds link Cys54/Cys69, Cys61/Cys73, and Cys68/Cys78.

It belongs to the conotoxin O1 superfamily. In terms of tissue distribution, expressed by the venom duct.

The protein resides in the secreted. Delta-conotoxins bind to site 6 of voltage-gated sodium channels (Nav) and inhibit the inactivation process. This Conus consors (Singed cone) protein is Delta-conotoxin-like CnVIA.